Reading from the N-terminus, the 570-residue chain is Sulfite reductase [NADPH] hemoprotein beta-component (570 aa).

[4Fe-4S] cluster contacts are provided by C434, C440, C479, and C483. Siroheme is bound at residue C483.

The protein belongs to the nitrite and sulfite reductase 4Fe-4S domain family. Alpha(8)-beta(8). The alpha component is a flavoprotein, the beta component is a hemoprotein. Requires siroheme as cofactor. The cofactor is [4Fe-4S] cluster.

The enzyme catalyses hydrogen sulfide + 3 NADP(+) + 3 H2O = sulfite + 3 NADPH + 4 H(+). It participates in sulfur metabolism; hydrogen sulfide biosynthesis; hydrogen sulfide from sulfite (NADPH route): step 1/1. Component of the sulfite reductase complex that catalyzes the 6-electron reduction of sulfite to sulfide. This is one of several activities required for the biosynthesis of L-cysteine from sulfate. In Escherichia coli (strain B / BL21-DE3), this protein is Sulfite reductase [NADPH] hemoprotein beta-component.